A 134-amino-acid polypeptide reads, in one-letter code: Neuropeptide-like peptide 11 (134 aa).

A signal peptide spans 1–20 (MMSTLALVSLAIFGIAVVCA). A propeptide spanning residues 21-106 (APKPATVPVA…YNRLIDAGKK (86 aa)) is cleaved from the precursor. A131 carries the alanine amide modification.

This is Neuropeptide-like peptide 11 (nlp-11) from Caenorhabditis elegans.